The primary structure comprises 146 residues: Hemoglobin subunit beta (146 aa).

Position 1 is an N-acetylvaline (V1). The 145-residue stretch at 2-146 (HLTADEKSAV…VATALGHKYH (145 aa)) folds into the Globin domain. T12 carries the post-translational modification Phosphothreonine. Residue S44 is modified to Phosphoserine. The residue at position 59 (K59) is an N6-acetyllysine. H63 contacts heme b. K82 is modified (N6-acetyllysine). H92 lines the heme b pocket. S-nitrosocysteine is present on C93. The residue at position 144 (K144) is an N6-acetyllysine.

Belongs to the globin family. As to quaternary structure, heterotetramer of two alpha chains and two beta chains. As to expression, red blood cells.

Involved in oxygen transport from the lung to the various peripheral tissues. This chain is Hemoglobin subunit beta (HBB), found in Antrozous pallidus (Pallid bat).